A 393-amino-acid polypeptide reads, in one-letter code: Acetate kinase (393 aa).

N6 provides a ligand contact to Mg(2+). Residue K13 participates in ATP binding. R87 contacts substrate. D143 serves as the catalytic Proton donor/acceptor. Residues 203 to 207, 278 to 280, and 326 to 330 contribute to the ATP site; these read HLGNG, DMR, and GIGEN. A Mg(2+)-binding site is contributed by E380.

It belongs to the acetokinase family. In terms of assembly, homodimer. Mg(2+) is required as a cofactor. Requires Mn(2+) as cofactor.

It localises to the cytoplasm. It catalyses the reaction acetate + ATP = acetyl phosphate + ADP. Its pathway is metabolic intermediate biosynthesis; acetyl-CoA biosynthesis; acetyl-CoA from acetate: step 1/2. In terms of biological role, catalyzes the formation of acetyl phosphate from acetate and ATP. Can also catalyze the reverse reaction. The protein is Acetate kinase of Mycoplasma mycoides subsp. mycoides SC (strain CCUG 32753 / NCTC 10114 / PG1).